The following is a 275-amino-acid chain: 3-methyl-2-oxobutanoate hydroxymethyltransferase (275 aa).

D44 and D83 together coordinate Mg(2+). Residues 44-45, D83, and K113 contribute to the 3-methyl-2-oxobutanoate site; that span reads DS. A Mg(2+)-binding site is contributed by E115. E182 functions as the Proton acceptor in the catalytic mechanism.

This sequence belongs to the PanB family. As to quaternary structure, homodecamer; pentamer of dimers. The cofactor is Mg(2+).

The protein localises to the cytoplasm. The catalysed reaction is 3-methyl-2-oxobutanoate + (6R)-5,10-methylene-5,6,7,8-tetrahydrofolate + H2O = 2-dehydropantoate + (6S)-5,6,7,8-tetrahydrofolate. It functions in the pathway cofactor biosynthesis; (R)-pantothenate biosynthesis; (R)-pantoate from 3-methyl-2-oxobutanoate: step 1/2. Functionally, catalyzes the reversible reaction in which hydroxymethyl group from 5,10-methylenetetrahydrofolate is transferred onto alpha-ketoisovalerate to form ketopantoate. The protein is 3-methyl-2-oxobutanoate hydroxymethyltransferase of Clostridium botulinum (strain Kyoto / Type A2).